A 372-amino-acid polypeptide reads, in one-letter code: Putative 26S proteasome regulatory subunit homolog MTH_1011 (372 aa).

164–171 serves as a coordination point for ATP; that stretch reads GSPGTGKT.

The protein belongs to the AAA ATPase family.

Its function is as follows. The 26S proteasome is involved in the ATP-dependent degradation of ubiquitinated proteins. The regulatory (or ATPase) complex confers ATP dependency and substrate specificity to the 26S complex. The polypeptide is Putative 26S proteasome regulatory subunit homolog MTH_1011 (Methanothermobacter thermautotrophicus (strain ATCC 29096 / DSM 1053 / JCM 10044 / NBRC 100330 / Delta H) (Methanobacterium thermoautotrophicum)).